Here is a 458-residue protein sequence, read N- to C-terminus: Methionine aminopeptidase 2-2 (458 aa).

Basic and acidic residues predominate over residues Met1–Gln14. A disordered region spans residues Met1–Ser93. Over residues Gln67 to Ala82 the composition is skewed to basic residues. Residue His209 participates in substrate binding. A divalent metal cation is bound by residues Asp230, Asp241, and His310. Substrate is bound at residue His318. Glu343 and Glu439 together coordinate a divalent metal cation.

Belongs to the peptidase M24A family. Methionine aminopeptidase eukaryotic type 2 subfamily. It depends on Co(2+) as a cofactor. Requires Zn(2+) as cofactor. Mn(2+) serves as cofactor. The cofactor is Fe(2+).

The protein resides in the cytoplasm. The enzyme catalyses Release of N-terminal amino acids, preferentially methionine, from peptides and arylamides.. Cotranslationally removes the N-terminal methionine from nascent proteins. The N-terminal methionine is often cleaved when the second residue in the primary sequence is small and uncharged (Met-Ala-, Cys, Gly, Pro, Ser, Thr, or Val). The polypeptide is Methionine aminopeptidase 2-2 (Emericella nidulans (strain FGSC A4 / ATCC 38163 / CBS 112.46 / NRRL 194 / M139) (Aspergillus nidulans)).